Consider the following 416-residue polypeptide: Exodeoxyribonuclease 7 large subunit (416 aa).

Belongs to the XseA family. Heterooligomer composed of large and small subunits.

Its subcellular location is the cytoplasm. It catalyses the reaction Exonucleolytic cleavage in either 5'- to 3'- or 3'- to 5'-direction to yield nucleoside 5'-phosphates.. In terms of biological role, bidirectionally degrades single-stranded DNA into large acid-insoluble oligonucleotides, which are then degraded further into small acid-soluble oligonucleotides. The protein is Exodeoxyribonuclease 7 large subunit of Nitratiruptor sp. (strain SB155-2).